A 402-amino-acid chain; its full sequence is Arginine biosynthesis bifunctional protein ArgJ (402 aa).

Positions 149, 175, 186, 266, 397, and 402 each coordinate substrate. The Nucleophile role is filled by threonine 186.

It belongs to the ArgJ family. In terms of assembly, heterotetramer of two alpha and two beta chains.

It is found in the cytoplasm. The catalysed reaction is N(2)-acetyl-L-ornithine + L-glutamate = N-acetyl-L-glutamate + L-ornithine. It carries out the reaction L-glutamate + acetyl-CoA = N-acetyl-L-glutamate + CoA + H(+). Its pathway is amino-acid biosynthesis; L-arginine biosynthesis; L-ornithine and N-acetyl-L-glutamate from L-glutamate and N(2)-acetyl-L-ornithine (cyclic): step 1/1. It functions in the pathway amino-acid biosynthesis; L-arginine biosynthesis; N(2)-acetyl-L-ornithine from L-glutamate: step 1/4. Its function is as follows. Catalyzes two activities which are involved in the cyclic version of arginine biosynthesis: the synthesis of N-acetylglutamate from glutamate and acetyl-CoA as the acetyl donor, and of ornithine by transacetylation between N(2)-acetylornithine and glutamate. This Prochlorococcus marinus subsp. pastoris (strain CCMP1986 / NIES-2087 / MED4) protein is Arginine biosynthesis bifunctional protein ArgJ.